Here is a 216-residue protein sequence, read N- to C-terminus: ATP phosphoribosyltransferase (216 aa).

It belongs to the ATP phosphoribosyltransferase family. Short subfamily. As to quaternary structure, heteromultimer composed of HisG and HisZ subunits.

It localises to the cytoplasm. It catalyses the reaction 1-(5-phospho-beta-D-ribosyl)-ATP + diphosphate = 5-phospho-alpha-D-ribose 1-diphosphate + ATP. It functions in the pathway amino-acid biosynthesis; L-histidine biosynthesis; L-histidine from 5-phospho-alpha-D-ribose 1-diphosphate: step 1/9. Its function is as follows. Catalyzes the condensation of ATP and 5-phosphoribose 1-diphosphate to form N'-(5'-phosphoribosyl)-ATP (PR-ATP). Has a crucial role in the pathway because the rate of histidine biosynthesis seems to be controlled primarily by regulation of HisG enzymatic activity. In Microcystis aeruginosa (strain NIES-843 / IAM M-2473), this protein is ATP phosphoribosyltransferase.